A 425-amino-acid chain; its full sequence is WD repeat-containing protein JIP5 (425 aa).

5 WD repeats span residues 9-48, 71-110, 117-158, 219-262, and 321-358; these read QLDSDLFAQAIHPEEPIVAVGLASGHVQTYRLPPGASDDS, RHKGSCRTLAFSVDGSSLYSAGTDGIVKVADTTTGRVTAK, LANG…AKSA, ELLS…DQDE, and LRQEGVIGLGFDVTGRMVSGGGKKLNIWGEKTWQDVPE. The interval 354–425 is disordered; that stretch reads QDVPEDDEDE…HGILHFSGLA (72 aa). Composition is skewed to acidic residues over residues 356–368 and 378–396; these read VPEDDEDEQEEEA and SDEDEDSDEDMEESSEDDE. Residues 399 to 414 are compositionally biased toward basic residues; the sequence is QKRKKRRKGKGGKQAK.

It belongs to the WD repeat WDR55 family.

The protein resides in the nucleus. It localises to the nucleolus. This Phaeosphaeria nodorum (strain SN15 / ATCC MYA-4574 / FGSC 10173) (Glume blotch fungus) protein is WD repeat-containing protein JIP5 (JIP5).